A 189-amino-acid polypeptide reads, in one-letter code: Tumor protein p53-inducible protein 11 (189 aa).

At 1–63 (MAAKQPPPLM…FAVREPLGLR (63 aa)) the chain is on the cytoplasmic side. Serine 14 bears the Phosphoserine mark. A helical membrane pass occupies residues 64–84 (VWQFLSAMLFSSVAIMALALP). Over 85 to 108 (DQLYDAVFDGAEVTSKTPIRLYGG) the chain is Extracellular. A helical transmembrane segment spans residues 109-129 (ALLSISLIMWNALYTAEKVII). Residue arginine 130 is a topological domain, cytoplasmic. A helical membrane pass occupies residues 131-151 (WTLLTEACYFGVQSLVVTATL). Residues 152–155 (AETG) are Extracellular-facing. The helical transmembrane segment at 156–176 (LMSLGTLLLLASRLLFVIVSI) threads the bilayer. Residues 177 to 189 (YYYYQVGRKPKKV) lie on the Cytoplasmic side of the membrane.

The protein localises to the membrane. This Rattus norvegicus (Rat) protein is Tumor protein p53-inducible protein 11 (Tp53i11).